We begin with the raw amino-acid sequence, 72 residues long: DNA-directed RNA polymerase subunit omega (72 aa).

It belongs to the RNA polymerase subunit omega family. As to quaternary structure, the RNAP catalytic core consists of 2 alpha, 1 beta, 1 beta' and 1 omega subunit. When a sigma factor is associated with the core the holoenzyme is formed, which can initiate transcription.

It catalyses the reaction RNA(n) + a ribonucleoside 5'-triphosphate = RNA(n+1) + diphosphate. Functionally, promotes RNA polymerase assembly. Latches the N- and C-terminal regions of the beta' subunit thereby facilitating its interaction with the beta and alpha subunits. The chain is DNA-directed RNA polymerase subunit omega from Clostridium acetobutylicum (strain ATCC 824 / DSM 792 / JCM 1419 / IAM 19013 / LMG 5710 / NBRC 13948 / NRRL B-527 / VKM B-1787 / 2291 / W).